A 128-amino-acid polypeptide reads, in one-letter code: Fluoride-specific ion channel FluC 1 (128 aa).

Helical transmembrane passes span 10 to 30 (VAFFAFWGGLARYGLTEAFSF), 32 to 52 (GTVIANLLGCFLLAFLTYFFL), 59 to 79 (AWLTTGLGTGFVGAFTTFSSF), and 93 to 113 (FGALLYFTGTIAAGFLFAWAG). The Na(+) site is built by Gly71 and Thr74.

It belongs to the fluoride channel Fluc/FEX (TC 1.A.43) family.

It localises to the cell membrane. The enzyme catalyses fluoride(in) = fluoride(out). With respect to regulation, na(+) is not transported, but it plays an essential structural role and its presence is essential for fluoride channel function. Its function is as follows. Fluoride-specific ion channel. Important for reducing fluoride concentration in the cell, thus reducing its toxicity. This chain is Fluoride-specific ion channel FluC 1, found in Lactobacillus delbrueckii subsp. bulgaricus (strain ATCC 11842 / DSM 20081 / BCRC 10696 / JCM 1002 / NBRC 13953 / NCIMB 11778 / NCTC 12712 / WDCM 00102 / Lb 14).